Here is a 202-residue protein sequence, read N- to C-terminus: Recombination protein RecR (202 aa).

The segment at 57 to 72 (CGVCRTFTEQPCCDIC) adopts a C4-type zinc-finger fold. Residues 81 to 176 (GQICVVESPS…STTKIAHGVP (96 aa)) enclose the Toprim domain.

It belongs to the RecR family.

May play a role in DNA repair. It seems to be involved in an RecBC-independent recombinational process of DNA repair. It may act with RecF and RecO. This is Recombination protein RecR from Hamiltonella defensa subsp. Acyrthosiphon pisum (strain 5AT).